A 292-amino-acid chain; its full sequence is Ribose import binding protein RbsB (292 aa).

The signal sequence occupies residues 1 to 23 (MKKLTALTSAVLLGLAVSSSASA).

It belongs to the bacterial solute-binding protein 2 family. The complex is composed of an ATP-binding protein (RbsA), two transmembrane proteins (RbsC) and a solute-binding protein (RbsB).

It localises to the periplasm. Functionally, part of the ABC transporter complex RbsABC involved in ribose import. Binds ribose. The chain is Ribose import binding protein RbsB (rbsB) from Haemophilus influenzae (strain ATCC 51907 / DSM 11121 / KW20 / Rd).